The primary structure comprises 463 residues: MTGPMAVRTDRTPLVVVGDALLDRDLTGTADRLAPDAPVPVVQECAERIRPGGAALAAYLAARDGREVTLIAGVGEDPAGLALRELLAPWLKLIPLPLTGTVPEKTRVLAQDRPVVRLDRGGGRVREATDEARDALGCARAVLVSDYGRGAADALRDVLAARPPLVWDPHPRGGPPVPGTRLVTPAEKEAHGFAPSEGRPGGGLRAAALNAAALVRDWRVAAVTVTLGSRGALLSYGEHPLLVPAPAAHHGDSCGAGDRFAATAAGLLADGALVGEAVEGAVGAATAFVAAGGAAAVPPAGSERALAALPDTDDPGALAARIRAEHGTVVAAGGCFDLLHAGHVGLLQAARRLGDCLVVCVNSDASVRRGKGGGRPVNPLADRVRVLRALACVDAVAVFDEDTPERLLGELRPDVWVKGGDYAGADLPEAGLLKEWGGQAVLLPYLDGRSSTALLARAAEGAR.

Residues 1 to 313 (MTGPMAVRTD…RALAALPDTD (313 aa)) are ribokinase. Asp-258 is an active-site residue. Residues 331-463 (AAGGCFDLLH…LLARAAEGAR (133 aa)) form a cytidylyltransferase region.

In the N-terminal section; belongs to the carbohydrate kinase PfkB family. The protein in the C-terminal section; belongs to the cytidylyltransferase family. In terms of assembly, homodimer.

It catalyses the reaction D-glycero-beta-D-manno-heptose 7-phosphate + ATP = D-glycero-beta-D-manno-heptose 1,7-bisphosphate + ADP + H(+). The enzyme catalyses D-glycero-beta-D-manno-heptose 1-phosphate + ATP + H(+) = ADP-D-glycero-beta-D-manno-heptose + diphosphate. Its pathway is nucleotide-sugar biosynthesis; ADP-L-glycero-beta-D-manno-heptose biosynthesis; ADP-L-glycero-beta-D-manno-heptose from D-glycero-beta-D-manno-heptose 7-phosphate: step 1/4. It participates in nucleotide-sugar biosynthesis; ADP-L-glycero-beta-D-manno-heptose biosynthesis; ADP-L-glycero-beta-D-manno-heptose from D-glycero-beta-D-manno-heptose 7-phosphate: step 3/4. Its function is as follows. Catalyzes the phosphorylation of D-glycero-D-manno-heptose 7-phosphate at the C-1 position to selectively form D-glycero-beta-D-manno-heptose-1,7-bisphosphate. In terms of biological role, catalyzes the ADP transfer from ATP to D-glycero-beta-D-manno-heptose 1-phosphate, yielding ADP-D-glycero-beta-D-manno-heptose. The polypeptide is Bifunctional protein HldE (Streptomyces coelicolor (strain ATCC BAA-471 / A3(2) / M145)).